Reading from the N-terminus, the 390-residue chain is Tryptophan synthase beta chain 2 (390 aa).

Position 83 is an N6-(pyridoxal phosphate)lysine (lysine 83).

This sequence belongs to the TrpB family. Tetramer of two alpha and two beta chains. It depends on pyridoxal 5'-phosphate as a cofactor.

The enzyme catalyses (1S,2R)-1-C-(indol-3-yl)glycerol 3-phosphate + L-serine = D-glyceraldehyde 3-phosphate + L-tryptophan + H2O. Its pathway is amino-acid biosynthesis; L-tryptophan biosynthesis; L-tryptophan from chorismate: step 5/5. Its function is as follows. The beta subunit is responsible for the synthesis of L-tryptophan from indole and L-serine. This is Tryptophan synthase beta chain 2 (trpB2) from Methanothermobacter marburgensis (strain ATCC BAA-927 / DSM 2133 / JCM 14651 / NBRC 100331 / OCM 82 / Marburg) (Methanobacterium thermoautotrophicum).